Here is a 309-residue protein sequence, read N- to C-terminus: MEQTFSVTTAQRLDTFLATLLNLSRVKVAKLIVDGLVSVNGKKITKNGWLVQPEDRVHVNWSEELFEKVPVEVQPYDFPLDILYEDEQIMVVNKPNGLISHPTSFNESESLLGAALFHCNHQPVFLVHRLDRDTSGVIMLAKNQSSLLHLQKQLQQRVMKRYYLALVHFPLDSLSGTISAPLERVGNNKVMWKVGNSSNKAKNAFTKFTVLNQNEKAALIKCELLTGRTHQIRVHLQFIKHPVYNDPLYGLKSEQATEYGQYLHAQQISFIHPTLNKEMGFEAQLDKTFSDKLDNLNLKIANSLYALFQ.

Residues glutamine 11–glutamate 87 enclose the S4 RNA-binding domain. The active site involves aspartate 131.

The protein belongs to the pseudouridine synthase RluA family.

It carries out the reaction a uridine in RNA = a pseudouridine in RNA. This is an uncharacterized protein from Mycoplasma pneumoniae (strain ATCC 29342 / M129 / Subtype 1) (Mycoplasmoides pneumoniae).